A 244-amino-acid chain; its full sequence is WUSCHEL-related homeobox 3 (244 aa).

Positions 4 to 68 (VASTRWCPTP…NHKARDRQKL (65 aa)) form a DNA-binding region, homeobox; WUS-type.

The protein belongs to the WUS homeobox family. In terms of tissue distribution, expressed in aerial parts of seedlings, inflorescences and flowers at low level. Expressed in a restricted number of L1 cells at the lateral regions of flower primordia.

Its subcellular location is the nucleus. In terms of biological role, probable transcription factor required to initiate organ founder cells in a lateral domain of shoot meristems. Involved in the lateral sepal axis-dependent development of flowers, probably by regulating the proliferation of L1 cells at the lateral region of flower primordia. Required for the formation of the margin cells of the first and second whorl organs. The sequence is that of WUSCHEL-related homeobox 3 (WOX3) from Arabidopsis thaliana (Mouse-ear cress).